We begin with the raw amino-acid sequence, 492 residues long: WD repeat-containing protein JIP5 (492 aa).

WD repeat units lie at residues 127 to 166 (RHKG…VVKK), 178 to 217 (KKND…LSNS), 236 to 274 (RSAY…ILIS), 276 to 317 (DQED…LEDQ), and 365 to 405 (RNHS…VEEN). Acidic residues-rich tracts occupy residues 404-414 (ENASVESDSDE) and 422-433 (DLSDDTSSDDET). The disordered stretch occupies residues 404-472 (ENASVESDSD…SKSVKKRKIM (69 aa)). A compositionally biased stretch (basic and acidic residues) spans 449 to 462 (KDLKEDHQEEKESN).

Interacts with BUD27 and GIS1.

Its subcellular location is the nucleus. The protein localises to the nucleolus. The protein is WD repeat-containing protein JIP5 (JIP5) of Saccharomyces cerevisiae (strain ATCC 204508 / S288c) (Baker's yeast).